Here is a 268-residue protein sequence, read N- to C-terminus: Nitrite transporter NirC (268 aa).

The Cytoplasmic portion of the chain corresponds to Met1 to Leu25. A helical transmembrane segment spans residues Gly26 to Phe46. The Periplasmic segment spans residues Thr47–Leu59. The helical transmembrane segment at Val60–Phe80 threads the bilayer. Residues Thr81 to Asn112 lie on the Cytoplasmic side of the membrane. Residues Leu113 to Val133 traverse the membrane as a helical segment. The Periplasmic portion of the chain corresponds to Asp134 to Met151. Residues Val152–Leu172 traverse the membrane as a helical segment. At Arg173–Lys179 the chain is on the cytoplasmic side. The helical transmembrane segment at Phe180–Ala200 threads the bilayer. Over Asn201–Asn225 the chain is Periplasmic. A helical membrane pass occupies residues Leu226 to Trp246. Over Tyr247 to Gly268 the chain is Cytoplasmic.

The protein belongs to the FNT transporter (TC 1.A.16) family.

It is found in the cell inner membrane. Catalyzes nitrite uptake and nitrite export across the cytoplasmic membrane. Is up to 10-fold more active than NarK or NarU in nitrite uptake for subsequent reduction in the cytoplasm by the NirB/NirD nitrite reductase. The protein is Nitrite transporter NirC (nirC) of Escherichia coli (strain K12).